A 139-amino-acid chain; its full sequence is ATP synthase epsilon chain (139 aa).

The protein belongs to the ATPase epsilon chain family. As to quaternary structure, F-type ATPases have 2 components, CF(1) - the catalytic core - and CF(0) - the membrane proton channel. CF(1) has five subunits: alpha(3), beta(3), gamma(1), delta(1), epsilon(1). CF(0) has three main subunits: a, b and c.

It is found in the cell inner membrane. In terms of biological role, produces ATP from ADP in the presence of a proton gradient across the membrane. This is ATP synthase epsilon chain from Serratia proteamaculans (strain 568).